A 560-amino-acid polypeptide reads, in one-letter code: E3 SUMO-protein ligase CBX4 (560 aa).

The interval 1 to 75 is involved in interaction with H3C15 and H3C1; the sequence is MELPAVGEHV…LMGYRKRGPK (75 aa). Residues 1-539 form an interaction with BMI1 region; sequence MELPAVGEHV…LSEFKPFFGN (539 aa). The Chromo domain maps to 11-69; it reads FAVESIEKKRIRKGRVEYLVKWRGWSPKYNTWEPEENILDPRLLIAFQNRERQEQLMGY. Glycyl lysine isopeptide (Lys-Gly) (interchain with G-Cter in SUMO2) cross-links involve residues Lys-77, Lys-106, Lys-114, and Lys-125. A disordered region spans residues 92–152; that stretch reads VLTGLQDSST…PPGKSGKYYY (61 aa). Position 149 is an N6-acetyllysine; alternate (Lys-149). Lys-149 participates in a covalent cross-link: Glycyl lysine isopeptide (Lys-Gly) (interchain with G-Cter in SUMO2); alternate. Residues Lys-157, Lys-167, and Lys-178 each participate in a glycyl lysine isopeptide (Lys-Gly) (interchain with G-Cter in SUMO2) cross-link. Ser-182 bears the Phosphoserine mark. Glycyl lysine isopeptide (Lys-Gly) (interchain with G-Cter in SUMO2) cross-links involve residues Lys-191, Lys-205, Lys-212, Lys-223, Lys-249, Lys-268, Lys-278, and Lys-280. A disordered region spans residues 217-243; that stretch reads AAGAPGKGSEKGPPNGMMPAPKEAVTG. Basic and acidic residues-rich tracts occupy residues 281 to 291 and 298 to 331; these read SGEVAEGEARS and AADERHPPADRTFKKAAGAEEKKVEAPPKRREEE. The interval 281–404 is disordered; the sequence is SGEVAEGEAR…HHHHHHAVGL (124 aa). Residues Lys-320, Lys-352, and Lys-365 each participate in a glycyl lysine isopeptide (Lys-Gly) (interchain with G-Cter in SUMO2) cross-link. Basic residues predominate over residues 380–401; it reads PSHHPHPHPHHHHHHHHHHHHA. A Phosphoserine modification is found at Ser-467. A Glycyl lysine isopeptide (Lys-Gly) (interchain with G-Cter in SUMO2); alternate cross-link involves residue Lys-494. Lys-494 is covalently cross-linked (Glycyl lysine isopeptide (Lys-Gly) (interchain with G-Cter in SUMO); alternate). Phosphothreonine; by HIPK2 is present on Thr-497. The segment covering 509-521 has biased composition (low complexity); it reads AAPTTTAEKPPAE. Positions 509–528 are disordered; it reads AAPTTTAEKPPAEAQDEPAE. The tract at residues 531–556 is involved in interaction with H3C15 and RNF2; it reads SEFKPFFGNIIITDVTANCLTVTFKE. The tract at residues 540–560 is interaction with RNF2; sequence IIITDVTANCLTVTFKEYVTV.

Interacts with histone H3-K9Me3. Interacts with CHTOP. Component of a PRC1-like complex. The composition of the PRC1 complex differs between the PRC1 complex in pluripotent embryonic stem cells containing RNF2, CBX7 and PCGF2, and the PRC1 complex in differentiating cells containing RNF2, CBX2, CBX4 and BMI1. Self-associates. Interacts with SUV39H1 and HIPK2. Interacts with CSNK2B. May interact with H3C15, H3C1 and RNF2. Interacts with SUMO1P1/SUMO5. Interacts with PRDM1/Blimp-1. Ubiquitinated. Ubiquitination regulates the function of the Polycomb group (PcG) multiprotein PRC1-like complex. Deubiquitinated by USP26. In terms of processing, phosphorylated on Thr-497 by HIPK2 upon DNA damage. This phosphorylation stimulates E3 SUMO-protein ligase activity and promotes sumoylation on Lys-494, as well as sumoylation of other target proteins, such as HNRNPK. As to expression, ubiquitous.

The protein localises to the nucleus. The protein resides in the nucleus speckle. It functions in the pathway protein modification; protein sumoylation. In terms of biological role, E3 SUMO-protein ligase that catalyzes sumoylation of target proteins by promoting the transfer of SUMO from the E2 enzyme to the substrate. Involved in the sumoylation of HNRNPK, a p53/TP53 transcriptional coactivator, hence indirectly regulates p53/TP53 transcriptional activation resulting in p21/CDKN1A expression. Monosumoylates ZNF131. Component of a Polycomb group (PcG) multiprotein PRC1-like complex, a complex class required to maintain the transcriptionally repressive state of many genes, including Hox genes, throughout development. PcG PRC1 complex acts via chromatin remodeling and modification of histones; it mediates monoubiquitination of histone H2A 'Lys-119', rendering chromatin heritably changed in its expressibility. Binds to histone H3 trimethylated at 'Lys-9' (H3K9me3). Plays a role in the lineage differentiation of the germ layers in embryonic development. The polypeptide is E3 SUMO-protein ligase CBX4 (CBX4) (Homo sapiens (Human)).